A 422-amino-acid polypeptide reads, in one-letter code: Putative nickel insertion protein (422 aa).

It belongs to the LarC family.

This chain is Putative nickel insertion protein, found in Synechocystis sp. (strain ATCC 27184 / PCC 6803 / Kazusa).